Consider the following 396-residue polypeptide: DNA replication and repair protein RecF (396 aa).

Position 30-37 (30-37 (GANGSGKT)) interacts with ATP.

Belongs to the RecF family.

The protein resides in the cytoplasm. The RecF protein is involved in DNA metabolism; it is required for DNA replication and normal SOS inducibility. RecF binds preferentially to single-stranded, linear DNA. It also seems to bind ATP. This chain is DNA replication and repair protein RecF, found in Thermomicrobium roseum (strain ATCC 27502 / DSM 5159 / P-2).